The following is a 147-amino-acid chain: Thyrotropin subunit beta (147 aa).

Residues 1-20 (MELSVAMYGLLCLLFSQAVP) form the signal peptide. 6 cysteine pairs are disulfide-bonded: cysteine 22–cysteine 72, cysteine 36–cysteine 87, cysteine 39–cysteine 127, cysteine 47–cysteine 103, cysteine 51–cysteine 105, and cysteine 108–cysteine 115. N-linked (GlcNAc...) asparagine glycosylation is present at asparagine 43.

Belongs to the glycoprotein hormones subunit beta family. In terms of assembly, heterodimer of a common alpha chain and a unique beta chain which confers biological specificity to thyrotropin, lutropin, follitropin and gonadotropin. As to expression, pituitary gland. Higher levels seen in immature fishes than the mature fishes.

The protein resides in the secreted. Functionally, indispensable for the control of thyroid structure and metabolism. May play some role in the biological processes of the immature fishes. The protein is Thyrotropin subunit beta (tshb) of Oncorhynchus mykiss (Rainbow trout).